The sequence spans 168 residues: MKRIIALLFFFLIAFGYSLSPEEEKQLIRDIAEIKATLKTFMEQTDKRFQDLNQRINELREDMNKRFEQVDKRFEQVDKRFEQINNELNRLIQIMVGIFAGQIALVAAVIGFAWWDRRTIIRKSKEETFEEMEKELRPEKFKKLLNALREKAKTDKELEAILKKYGLL.

Helical transmembrane passes span 4-24 and 94-114; these read IIALLFFFLIAFGYSLSPEEE and IMVGIFAGQIALVAAVIGFAW.

The protein to A.aeolicus aq_1446.

It localises to the cell membrane. This is an uncharacterized protein from Aquifex aeolicus (strain VF5).